A 100-amino-acid chain; its full sequence is Mini zinc finger protein 2 (100 aa).

Residues 1-26 (MRKRQVVLRRASPEEPSRSSSTASSL) form a disordered region. The ZF-HD dimerization-type; degenerate zinc finger occupies 33–83 (YGECQKNHAAAVGGYAVDGCREFMASRGEEGTVAALTCAACGCHRSFHRRE).

Homo- and heterodimers. Interacts with ZHD1, ZHD3, ZHD5, ZHD8, ZHD10 and ZHD13. As to expression, mostly expressed in stems, flowers and siliques, and, to a lower extent, in inflorescence.

It is found in the cytoplasm. In terms of biological role, inhibits zinc finger homeodomain (ZHD) transcription factors by interacting with them to prevent both their nuclear localization and their DNA-binding properties. Involved in integrating signals from multiple hormones by regulating the expression of specific genes. The chain is Mini zinc finger protein 2 (MIF2) from Arabidopsis thaliana (Mouse-ear cress).